Consider the following 693-residue polypeptide: Polyribonucleotide nucleotidyltransferase (693 aa).

Positions 490 and 496 each coordinate Mg(2+). The KH domain maps to 557-617 (PRISWFFIDP…EKVQEAVEYI (61 aa)). The S1 motif domain occupies 627–691 (GDLYTGKVTR…DAGRLQFRRL (65 aa)).

It belongs to the polyribonucleotide nucleotidyltransferase family. It depends on Mg(2+) as a cofactor.

The protein resides in the cytoplasm. The catalysed reaction is RNA(n+1) + phosphate = RNA(n) + a ribonucleoside 5'-diphosphate. Functionally, involved in mRNA degradation. Catalyzes the phosphorolysis of single-stranded polyribonucleotides processively in the 3'- to 5'-direction. This Fervidobacterium nodosum (strain ATCC 35602 / DSM 5306 / Rt17-B1) protein is Polyribonucleotide nucleotidyltransferase.